Reading from the N-terminus, the 326-residue chain is Ketol-acid reductoisomerase (NADP(+)) (326 aa).

The 180-residue stretch at 1–180 (MDIIHDNAAD…GLTRGGVLEC (180 aa)) folds into the KARI N-terminal Rossmann domain. NADP(+) is bound by residues 24–27 (YGAQ), R47, and S51. Residue H106 is part of the active site. Residue G132 coordinates NADP(+). The region spanning 181-326 (TMAQETYEDL…AKIRSLFERN (146 aa)) is the KARI C-terminal knotted domain. Mg(2+) is bound by residues D189, E193, E225, and E229. S250 serves as a coordination point for substrate.

The protein belongs to the ketol-acid reductoisomerase family. Mg(2+) is required as a cofactor.

It catalyses the reaction (2R)-2,3-dihydroxy-3-methylbutanoate + NADP(+) = (2S)-2-acetolactate + NADPH + H(+). The enzyme catalyses (2R,3R)-2,3-dihydroxy-3-methylpentanoate + NADP(+) = (S)-2-ethyl-2-hydroxy-3-oxobutanoate + NADPH + H(+). It participates in amino-acid biosynthesis; L-isoleucine biosynthesis; L-isoleucine from 2-oxobutanoate: step 2/4. The protein operates within amino-acid biosynthesis; L-valine biosynthesis; L-valine from pyruvate: step 2/4. In terms of biological role, involved in the biosynthesis of branched-chain amino acids (BCAA). Catalyzes an alkyl-migration followed by a ketol-acid reduction of (S)-2-acetolactate (S2AL) to yield (R)-2,3-dihydroxy-isovalerate. In the isomerase reaction, S2AL is rearranged via a Mg-dependent methyl migration to produce 3-hydroxy-3-methyl-2-ketobutyrate (HMKB). In the reductase reaction, this 2-ketoacid undergoes a metal-dependent reduction by NADPH to yield (R)-2,3-dihydroxy-isovalerate. This is Ketol-acid reductoisomerase (NADP(+)) from Akkermansia muciniphila (strain ATCC BAA-835 / DSM 22959 / JCM 33894 / BCRC 81048 / CCUG 64013 / CIP 107961 / Muc).